We begin with the raw amino-acid sequence, 882 residues long: Bifunctional heparan sulfate N-deacetylase/N-sulfotransferase 1 (882 aa).

Over 1 to 17 (MPALACLRRLCRHLSPQ) the chain is Cytoplasmic. The tract at residues 1–169 (MPALACLRRL…VAYGVGIIGF (169 aa)) is sufficient for localization to Golgi membrane. The helical; Signal-anchor for type II membrane protein transmembrane segment at 18-38 (AVLFLLFVFCLFSVFVSAYYL) threads the bilayer. Over 39 to 882 (YGWNRGLEPS…WLREDLQNTR (844 aa)) the chain is Lumenal. Positions 40 to 598 (GWNRGLEPSA…KRHKDIWSKE (559 aa)) are heparan sulfate N-deacetylase 1. N-linked (GlcNAc...) asparagine glycans are attached at residues Asn231, Asn351, and Asn401. Positions 599-882 (KTCDRFPKLL…WLREDLQNTR (284 aa)) are heparan sulfate N-sulfotransferase 1. Catalysis depends on Lys614, which acts as the For sulfotransferase activity. 614-618 (KTGTT) is a binding site for adenosine 3',5'-bisphosphate. A glycan (N-linked (GlcNAc...) asparagine) is linked at Asn667. Residues Ser712 and Trp817 each coordinate adenosine 3',5'-bisphosphate. A disulfide bridge links Cys818 with Cys828. 833 to 837 (KGRKY) is a binding site for adenosine 3',5'-bisphosphate.

This sequence belongs to the sulfotransferase 1 family. NDST subfamily. Monomer. Interacts with heparan sulfate co-polymerase subunits EXT1 and EXT2. As to expression, widely expressed in adult and throughout development.

Its subcellular location is the golgi apparatus membrane. The protein resides in the golgi apparatus. The protein localises to the trans-Golgi network membrane. It localises to the cis-Golgi network membrane. The catalysed reaction is N-acetyl-alpha-D-glucosaminyl-[heparan sulfate](n) + H2O = alpha-D-glucosaminyl-[heparan sulfate](n) + acetate. The enzyme catalyses alpha-D-glucosaminyl-[heparan sulfate](n) + 3'-phosphoadenylyl sulfate = N-sulfo-alpha-D-glucosaminyl-[heparan sulfate](n) + adenosine 3',5'-bisphosphate + 2 H(+). It participates in glycan metabolism; heparan sulfate biosynthesis. Its pathway is glycan metabolism; heparin biosynthesis. Inhibited by long N-sulfated sequences (more than 6 sugar residues) accumulating in its substrates heparan sulfate, and heparin. In terms of biological role, essential bifunctional enzyme that catalyzes both the N-deacetylation and the N-sulfation of glucosamine (GlcNAc) of the glycosaminoglycan in heparan sulfate. Modifies the GlcNAc-GlcA disaccharide repeating sugar backbone to make N-sulfated heparosan, a prerequisite substrate for later modifications in heparin biosynthesis. Plays a role in determining the extent and pattern of sulfation of heparan sulfate. Participates in biosynthesis of heparan sulfate that can ultimately serve as L-selectin ligands, thereby playing a role in inflammatory response. Required for the exosomal release of SDCBP, CD63 and syndecan. The chain is Bifunctional heparan sulfate N-deacetylase/N-sulfotransferase 1 from Mus musculus (Mouse).